The following is a 274-amino-acid chain: uncharacterized protein (274 aa).

This sequence belongs to the class IV-like SAM-binding methyltransferase superfamily. RNA methyltransferase TrmH family.

This is an uncharacterized protein from Synechocystis sp. (strain ATCC 27184 / PCC 6803 / Kazusa).